The primary structure comprises 459 residues: UDP-N-acetylmuramoylalanine--D-glutamate ligase (459 aa).

119 to 125 (GTNGKTT) is a binding site for ATP.

It belongs to the MurCDEF family.

It is found in the cytoplasm. The enzyme catalyses UDP-N-acetyl-alpha-D-muramoyl-L-alanine + D-glutamate + ATP = UDP-N-acetyl-alpha-D-muramoyl-L-alanyl-D-glutamate + ADP + phosphate + H(+). Its pathway is cell wall biogenesis; peptidoglycan biosynthesis. Functionally, cell wall formation. Catalyzes the addition of glutamate to the nucleotide precursor UDP-N-acetylmuramoyl-L-alanine (UMA). The protein is UDP-N-acetylmuramoylalanine--D-glutamate ligase of Lacticaseibacillus paracasei (strain ATCC 334 / BCRC 17002 / CCUG 31169 / CIP 107868 / KCTC 3260 / NRRL B-441) (Lactobacillus paracasei).